Reading from the N-terminus, the 427-residue chain is 3-phosphoshikimate 1-carboxyvinyltransferase (427 aa).

3-phosphoshikimate is bound by residues Lys22, Ser23, and Arg27. Residue Lys22 coordinates phosphoenolpyruvate. Phosphoenolpyruvate contacts are provided by Gly96 and Arg124. 3-phosphoshikimate-binding residues include Ser169, Ser170, Gln171, Ser197, Asp313, Asn336, and Lys340. Position 171 (Gln171) interacts with phosphoenolpyruvate. The Proton acceptor role is filled by Asp313. Arg344, Arg386, and Lys411 together coordinate phosphoenolpyruvate.

Belongs to the EPSP synthase family. In terms of assembly, monomer.

The protein localises to the cytoplasm. It catalyses the reaction 3-phosphoshikimate + phosphoenolpyruvate = 5-O-(1-carboxyvinyl)-3-phosphoshikimate + phosphate. It participates in metabolic intermediate biosynthesis; chorismate biosynthesis; chorismate from D-erythrose 4-phosphate and phosphoenolpyruvate: step 6/7. Functionally, catalyzes the transfer of the enolpyruvyl moiety of phosphoenolpyruvate (PEP) to the 5-hydroxyl of shikimate-3-phosphate (S3P) to produce enolpyruvyl shikimate-3-phosphate and inorganic phosphate. The polypeptide is 3-phosphoshikimate 1-carboxyvinyltransferase (Escherichia coli O8 (strain IAI1)).